Reading from the N-terminus, the 203-residue chain is MKLRWFAFLMVLLAGCSSKKDYQNPPWNPEVPVKRAMQWMPISEKAGKAWGVSPRLITAIIAVESGGNPTLVSKSNAVGLMQLKASTAGREVYRYMGWKGQPSTSELKNPERNISMGTAYLSILEHGVLKGIDDPEVMQYALVVSYVNGAGALLRTFSSDRKEAIEEINGMDKNEFVDHVAKNHPAPQAPRYIWKVQKAMDAM.

A signal peptide spans 1–15 (MKLRWFAFLMVLLAG). Residue Cys16 is the site of N-palmitoyl cysteine attachment. Residue Cys16 is the site of S-diacylglycerol cysteine attachment.

This sequence belongs to the transglycosylase Slt family.

It localises to the cell outer membrane. It carries out the reaction Endolytic cleavage of the (1-&gt;4)-beta-glycosidic linkage between N-acetylmuramic acid (MurNAc) and N-acetylglucosamine (GlcNAc) residues in peptidoglycan with concomitant formation of a 1,6-anhydrobond in the MurNAc residue.. Murein-degrading enzyme. May play a role in recycling of muropeptides during cell elongation and/or cell division. Preferentially cleaves at a distance of more than two disaccharide units from the ends of the glycan chain. The sequence is that of Endo-type membrane-bound lytic murein transglycosylase A from Enterobacter sp. (strain 638).